A 336-amino-acid chain; its full sequence is Glyceraldehyde-3-phosphate dehydrogenase, plasmid (336 aa).

Residues 12–13, aspartate 37, arginine 81, and serine 123 each bind NAD(+); that span reads RI. D-glyceraldehyde 3-phosphate contacts are provided by residues 154 to 156 and threonine 185; that span reads SCT. Cysteine 155 serves as the catalytic Nucleophile. Asparagine 186 provides a ligand contact to NAD(+). Residues arginine 200, 213–214, and arginine 236 each bind D-glyceraldehyde 3-phosphate; that span reads TG. Residue asparagine 317 participates in NAD(+) binding.

It belongs to the glyceraldehyde-3-phosphate dehydrogenase family. In terms of assembly, homotetramer.

It carries out the reaction D-glyceraldehyde 3-phosphate + phosphate + NAD(+) = (2R)-3-phospho-glyceroyl phosphate + NADH + H(+). The protein operates within carbohydrate biosynthesis; Calvin cycle. Its function is as follows. Could be involved in carbon fixation as a component of the Calvin cycle. Catalyzes the oxidative phosphorylation of glyceraldehyde 3-phosphate (G3P) to 1,3-bisphosphoglycerate (BPG) using the cofactor NAD. The first reaction step involves the formation of a hemiacetal intermediate between G3P and a cysteine residue, and this hemiacetal intermediate is then oxidized to a thioester, with concomitant reduction of NAD to NADH. The reduced NADH is then exchanged with the second NAD, and the thioester is attacked by a nucleophilic inorganic phosphate to produce BPG. This Cupriavidus necator (strain ATCC 17699 / DSM 428 / KCTC 22496 / NCIMB 10442 / H16 / Stanier 337) (Ralstonia eutropha) protein is Glyceraldehyde-3-phosphate dehydrogenase, plasmid (cbbGP).